Consider the following 424-residue polypeptide: Serine--tRNA ligase (424 aa).

231 to 233 (TAE) provides a ligand contact to L-serine. 262-264 (RSE) contributes to the ATP binding site. Position 285 (Glu285) interacts with L-serine. 349 to 352 (EISS) serves as a coordination point for ATP. Ser385 lines the L-serine pocket.

This sequence belongs to the class-II aminoacyl-tRNA synthetase family. Type-1 seryl-tRNA synthetase subfamily. As to quaternary structure, homodimer. The tRNA molecule binds across the dimer.

It is found in the cytoplasm. The enzyme catalyses tRNA(Ser) + L-serine + ATP = L-seryl-tRNA(Ser) + AMP + diphosphate + H(+). It carries out the reaction tRNA(Sec) + L-serine + ATP = L-seryl-tRNA(Sec) + AMP + diphosphate + H(+). Its pathway is aminoacyl-tRNA biosynthesis; selenocysteinyl-tRNA(Sec) biosynthesis; L-seryl-tRNA(Sec) from L-serine and tRNA(Sec): step 1/1. In terms of biological role, catalyzes the attachment of serine to tRNA(Ser). Is also able to aminoacylate tRNA(Sec) with serine, to form the misacylated tRNA L-seryl-tRNA(Sec), which will be further converted into selenocysteinyl-tRNA(Sec). This Bacillus anthracis (strain A0248) protein is Serine--tRNA ligase.